We begin with the raw amino-acid sequence, 283 residues long: Probable endonuclease 4 (283 aa).

H69, H109, E145, D179, H182, H216, D229, H231, and E261 together coordinate Zn(2+).

Belongs to the AP endonuclease 2 family. It depends on Zn(2+) as a cofactor.

It carries out the reaction Endonucleolytic cleavage to 5'-phosphooligonucleotide end-products.. Its function is as follows. Endonuclease IV plays a role in DNA repair. It cleaves phosphodiester bonds at apurinic or apyrimidinic (AP) sites, generating a 3'-hydroxyl group and a 5'-terminal sugar phosphate. This Desulfosudis oleivorans (strain DSM 6200 / JCM 39069 / Hxd3) (Desulfococcus oleovorans) protein is Probable endonuclease 4.